We begin with the raw amino-acid sequence, 334 residues long: HTH-type transcriptional repressor PurR (334 aa).

The 55-residue stretch at 2-56 folds into the HTH lacI-type domain; sequence ATIKDVARLAGVSTTTVSHVINKTRFVAEATQEKVNKAVDELNYAPSAVARSLKC. A DNA-binding region (H-T-H motif) is located at residues 4–23; it reads IKDVARLAGVSTTTVSHVIN. A DNA-binding region spans residues 48–56; sequence SAVARSLKC. Residues Phe73, Lys189, Phe220, and Asp274 each coordinate hypoxanthine.

As to quaternary structure, homodimer.

The protein operates within purine metabolism; purine nucleotide biosynthesis [regulation]. In terms of biological role, is the main repressor of the genes involved in the de novo synthesis of purine nucleotides, regulating purB, purC, purEK, purF, purHD, purL, purMN and guaBA expression. PurR is allosterically activated to bind its cognate DNA by binding the purine corepressors, hypoxanthine or guanine, thereby effecting transcription repression. This chain is HTH-type transcriptional repressor PurR, found in Vibrio atlanticus (strain LGP32) (Vibrio splendidus (strain Mel32)).